A 106-amino-acid chain; its full sequence is Large ribosomal subunit protein eL42 (106 aa).

This sequence belongs to the eukaryotic ribosomal protein eL42 family.

In Eremothecium gossypii (strain ATCC 10895 / CBS 109.51 / FGSC 9923 / NRRL Y-1056) (Yeast), this protein is Large ribosomal subunit protein eL42 (RPL44).